Here is a 655-residue protein sequence, read N- to C-terminus: DNA mismatch repair protein MutL (655 aa).

Disordered regions lie at residues 357–416 (EKKQ…DDYT) and 439–460 (DFDS…SKDP). The segment covering 371–383 (SHEEDEKNDDKAY) has biased composition (basic and acidic residues). Residues 402-416 (NTSVSTSPNSDDDYT) are compositionally biased toward polar residues.

It belongs to the DNA mismatch repair MutL/HexB family.

In terms of biological role, this protein is involved in the repair of mismatches in DNA. It is required for dam-dependent methyl-directed DNA mismatch repair. May act as a 'molecular matchmaker', a protein that promotes the formation of a stable complex between two or more DNA-binding proteins in an ATP-dependent manner without itself being part of a final effector complex. This chain is DNA mismatch repair protein MutL, found in Staphylococcus saprophyticus subsp. saprophyticus (strain ATCC 15305 / DSM 20229 / NCIMB 8711 / NCTC 7292 / S-41).